Consider the following 200-residue polypeptide: MRTFVLRARAASTHSQTLLANVGGDAHSEILAHTLMNAIFVAQSHRDDVVVHLVLESTQDYSRTITFVAAEMRDIGGFHEQALLAKVVRALDASAGMGKEQMKAVESGITVRTQSFEKVVKELAEDGHQLYMMDPKGENIRELDFAQKPCFLLTDHIPMPKKSFNSLKRLGTEKISLGPTMLFASQCVVLINNELDLAGF.

Residues Met-133 and Cys-187 each coordinate S-adenosyl-L-methionine.

It belongs to the methyltransferase superfamily. TrmY family.

Its subcellular location is the cytoplasm. The sequence is that of Putative pseudouridine methyltransferase from Alcanivorax borkumensis (strain ATCC 700651 / DSM 11573 / NCIMB 13689 / SK2).